We begin with the raw amino-acid sequence, 216 residues long: MAYPGKKSKSFETPRHPWQEARMASEVQLVKAYGLRNKREVWKAASTLRMYRSEARRLLASAANSQERGLEGHQKTQSEEILAKLIRYGIIKSDADIDDILSLKTENILERRLQTQVLRLGLARTVVQARQFITHGHIAINGRKATVPGMLVSKEDEMHIGYYATSPLVSESHPERPVQVASVLADSTTTLRAVAEAKQAKEKPPERGGRKRRGRR.

One can recognise an S4 RNA-binding domain in the interval 111–175 (RRLQTQVLRL…SPLVSESHPE (65 aa)). The tract at residues 194-216 (VAEAKQAKEKPPERGGRKRRGRR) is disordered. Residues 198-208 (KQAKEKPPERG) show a composition bias toward basic and acidic residues.

The protein belongs to the universal ribosomal protein uS4 family. In terms of assembly, part of the 30S ribosomal subunit. Contacts protein S5. The interaction surface between S4 and S5 is involved in control of translational fidelity.

Functionally, one of the primary rRNA binding proteins, it binds directly to 16S rRNA where it nucleates assembly of the body of the 30S subunit. Its function is as follows. With S5 and S12 plays an important role in translational accuracy. The protein is Small ribosomal subunit protein uS4 of Methanosarcina barkeri (strain Fusaro / DSM 804).